A 142-amino-acid polypeptide reads, in one-letter code: uncharacterized protein (142 aa).

Asn-29 and Asn-67 each carry an N-linked (GlcNAc...) asparagine; by host glycan. The helical transmembrane segment at 88-108 (VFYLGYPVIFIIGVTYFSIIA) threads the bilayer.

The protein localises to the membrane. This is an uncharacterized protein from Acanthamoeba polyphaga mimivirus (APMV).